Reading from the N-terminus, the 276-residue chain is Glutamate racemase (276 aa).

Substrate contacts are provided by residues 10 to 11 (DS) and 42 to 43 (YG). Catalysis depends on Cys-73, which acts as the Proton donor/acceptor. 74 to 75 (NS) serves as a coordination point for substrate. Cys-183 serves as the catalytic Proton donor/acceptor. 184–185 (TH) provides a ligand contact to substrate.

This sequence belongs to the aspartate/glutamate racemases family.

It catalyses the reaction L-glutamate = D-glutamate. The protein operates within cell wall biogenesis; peptidoglycan biosynthesis. Provides the (R)-glutamate required for cell wall biosynthesis. The chain is Glutamate racemase from Parafrankia sp. (strain EAN1pec).